The primary structure comprises 390 residues: Chorismate synthase (390 aa).

Positions 40 and 46 each coordinate NADP(+). FMN contacts are provided by residues 129-131 (RAS), 249-250 (QA), glycine 294, 309-313 (KPIPT), and arginine 335.

Belongs to the chorismate synthase family. Homotetramer. Requires FMNH2 as cofactor.

It catalyses the reaction 5-O-(1-carboxyvinyl)-3-phosphoshikimate = chorismate + phosphate. The protein operates within metabolic intermediate biosynthesis; chorismate biosynthesis; chorismate from D-erythrose 4-phosphate and phosphoenolpyruvate: step 7/7. Catalyzes the anti-1,4-elimination of the C-3 phosphate and the C-6 proR hydrogen from 5-enolpyruvylshikimate-3-phosphate (EPSP) to yield chorismate, which is the branch point compound that serves as the starting substrate for the three terminal pathways of aromatic amino acid biosynthesis. This reaction introduces a second double bond into the aromatic ring system. This is Chorismate synthase from Desulforudis audaxviator (strain MP104C).